Here is a 285-residue protein sequence, read N- to C-terminus: Nucleotide-binding protein Pnap_0906 (285 aa).

Residue 8–15 (GMSGSGKS) participates in ATP binding. Residue 57-60 (DVRS) coordinates GTP.

It belongs to the RapZ-like family.

Displays ATPase and GTPase activities. The chain is Nucleotide-binding protein Pnap_0906 from Polaromonas naphthalenivorans (strain CJ2).